The sequence spans 184 residues: Crossover junction endodeoxyribonuclease RuvC (184 aa).

Residues aspartate 7, glutamate 68, and aspartate 141 contribute to the active site. The Mg(2+) site is built by aspartate 7, glutamate 68, and aspartate 141.

It belongs to the RuvC family. In terms of assembly, homodimer which binds Holliday junction (HJ) DNA. The HJ becomes 2-fold symmetrical on binding to RuvC with unstacked arms; it has a different conformation from HJ DNA in complex with RuvA. In the full resolvosome a probable DNA-RuvA(4)-RuvB(12)-RuvC(2) complex forms which resolves the HJ. Mg(2+) is required as a cofactor.

It is found in the cytoplasm. It carries out the reaction Endonucleolytic cleavage at a junction such as a reciprocal single-stranded crossover between two homologous DNA duplexes (Holliday junction).. The RuvA-RuvB-RuvC complex processes Holliday junction (HJ) DNA during genetic recombination and DNA repair. Endonuclease that resolves HJ intermediates. Cleaves cruciform DNA by making single-stranded nicks across the HJ at symmetrical positions within the homologous arms, yielding a 5'-phosphate and a 3'-hydroxyl group; requires a central core of homology in the junction. The consensus cleavage sequence is 5'-(A/T)TT(C/G)-3'. Cleavage occurs on the 3'-side of the TT dinucleotide at the point of strand exchange. HJ branch migration catalyzed by RuvA-RuvB allows RuvC to scan DNA until it finds its consensus sequence, where it cleaves and resolves the cruciform DNA. The polypeptide is Crossover junction endodeoxyribonuclease RuvC (Mycobacterium ulcerans (strain Agy99)).